The primary structure comprises 291 residues: Shikimate dehydrogenase (NADP(+)) (291 aa).

Shikimate contacts are provided by residues 14–16 (SKS) and Thr61. Catalysis depends on Lys65, which acts as the Proton acceptor. Glu77 is a binding site for NADP(+). Residues Asn86 and Asp102 each contribute to the shikimate site. Residues 139–143 (GAGGA), 164–169 (NRTFSR), and Leu232 contribute to the NADP(+) site. A shikimate-binding site is contributed by Tyr234. Gly256 provides a ligand contact to NADP(+).

This sequence belongs to the shikimate dehydrogenase family. As to quaternary structure, homodimer.

The enzyme catalyses shikimate + NADP(+) = 3-dehydroshikimate + NADPH + H(+). Its pathway is metabolic intermediate biosynthesis; chorismate biosynthesis; chorismate from D-erythrose 4-phosphate and phosphoenolpyruvate: step 4/7. Involved in the biosynthesis of the chorismate, which leads to the biosynthesis of aromatic amino acids. Catalyzes the reversible NADPH linked reduction of 3-dehydroshikimate (DHSA) to yield shikimate (SA). The protein is Shikimate dehydrogenase (NADP(+)) of Blochmanniella pennsylvanica (strain BPEN).